The primary structure comprises 188 residues: PRA1 family protein 3 (188 aa).

An N-acetylmethionine modification is found at methionine 1. The Cytoplasmic segment spans residues 1–35 (MDVNIAPLRAWDDFFPGSDRFARPDFRDISKWNNR). A run of 2 helical transmembrane segments spans residues 36-56 (VVSNLLYYQTNYLVVAAMMIS) and 57-77 (IVGFLSPFNMILGGIVVVLVF). The Cytoplasmic segment spans residues 78-93 (TGFVWAAHNKDVLRRM). The next 2 helical transmembrane spans lie at 94-114 (KKRYPTTFVMVVMLASYFLIS) and 115-135 (MFGGVMVFVFGITFPLLLMFI). Residues 103-117 (MVVMLASYFLISMFG) are required for homodimer formation and heterodimer formation with ARL6IP1. At 136 to 188 (HASLRLRNLKNKLENKMEGIGLKRTPMGIVLDALEQQEEGINRLTDYISKVKE) the chain is on the cytoplasmic side. Positions 136-188 (HASLRLRNLKNKLENKMEGIGLKRTPMGIVLDALEQQEEGINRLTDYISKVKE) are targeting to endoplasmic reticulum membrane.

It belongs to the PRA1 family. In terms of assembly, homodimer. Heterodimer with ARL6IP1. Forms multimers. Interacts with ARL6. Interacts with prenylated RAB1A and RAB3A. Interacts with SLC1A1/EAAC1. Interacts with RTN2 (via first transmembrane domain). Does not interact with VAMP1, VAMP2 or VAMP3.

The protein resides in the endoplasmic reticulum membrane. The protein localises to the cell membrane. Its subcellular location is the cytoplasm. It is found in the cytoskeleton. In terms of biological role, regulates intracellular concentrations of taurine and glutamate. Negatively modulates SLC1A1/EAAC1 glutamate transport activity by decreasing its affinity for glutamate in a PKC activity-dependent manner. Plays a role in the retention of SLC1A1/EAAC1 in the endoplasmic reticulum. The protein is PRA1 family protein 3 (ARL6IP5) of Homo sapiens (Human).